The chain runs to 80 residues: Anaphase-promoting complex subunit hcn1 (80 aa).

Residue M1 is modified to N-acetylmethionine. The tract at residues 26-54 (QTLDSESTTEEALQKNEESTRLSPEKKKI) is disordered. A compositionally biased stretch (basic and acidic residues) spans 37-54 (ALQKNEESTRLSPEKKKI).

The APC/C is composed of at least 13 subunits: apc1, apc2, nuc2, apc4, apc5, cut9, apc8, apc10, apc11, hcn1, apc13, apc14 and apc15. Interacts directly (via N-terminus) with cut9.

Its function is as follows. Component of the anaphase promoting complex/cyclosome (APC/C), a cell cycle-regulated E3 ubiquitin-protein ligase complex that controls progression through mitosis and the G1 phase of the cell cycle. The APC/C is thought to confer substrate specificity and, in the presence of ubiquitin-conjugating E2 enzymes, it catalyzes the formation of protein-ubiquitin conjugates that are subsequently degraded by the 26S proteasome. Has a role in assembling cut9 in the 20S APC/cyclosome. The polypeptide is Anaphase-promoting complex subunit hcn1 (hcn1) (Schizosaccharomyces pombe (strain 972 / ATCC 24843) (Fission yeast)).